The sequence spans 336 residues: Dihydroorotate dehydrogenase (quinone) (336 aa).

FMN-binding positions include 62–66 (AGLDK) and T86. Substrate is bound at residue K66. 111-115 (NRMGF) is a substrate binding site. Positions 139 and 172 each coordinate FMN. N172 contributes to the substrate binding site. The active-site Nucleophile is S175. N177 lines the substrate pocket. K217 and T245 together coordinate FMN. Substrate is bound at residue 246–247 (NT). Residues G268, G297, and 318–319 (YS) contribute to the FMN site.

It belongs to the dihydroorotate dehydrogenase family. Type 2 subfamily. Monomer. FMN serves as cofactor.

The protein localises to the cell membrane. The enzyme catalyses (S)-dihydroorotate + a quinone = orotate + a quinol. The protein operates within pyrimidine metabolism; UMP biosynthesis via de novo pathway; orotate from (S)-dihydroorotate (quinone route): step 1/1. In terms of biological role, catalyzes the conversion of dihydroorotate to orotate with quinone as electron acceptor. This chain is Dihydroorotate dehydrogenase (quinone), found in Escherichia coli (strain UTI89 / UPEC).